The following is a 441-amino-acid chain: Histidinol dehydrogenase (441 aa).

Residues tyrosine 136, glutamine 197, and asparagine 220 each contribute to the NAD(+) site. Substrate-binding residues include serine 243, glutamine 265, and histidine 268. Glutamine 265 and histidine 268 together coordinate Zn(2+). Residues glutamate 333 and histidine 334 each act as proton acceptor in the active site. The substrate site is built by histidine 334, aspartate 367, glutamate 421, and histidine 426. Aspartate 367 is a binding site for Zn(2+). Residue histidine 426 participates in Zn(2+) binding.

It belongs to the histidinol dehydrogenase family. The cofactor is Zn(2+).

The enzyme catalyses L-histidinol + 2 NAD(+) + H2O = L-histidine + 2 NADH + 3 H(+). It functions in the pathway amino-acid biosynthesis; L-histidine biosynthesis; L-histidine from 5-phospho-alpha-D-ribose 1-diphosphate: step 9/9. Its function is as follows. Catalyzes the sequential NAD-dependent oxidations of L-histidinol to L-histidinaldehyde and then to L-histidine. This chain is Histidinol dehydrogenase, found in Pseudomonas fluorescens (strain Pf0-1).